The following is a 126-amino-acid chain: Profilin (126 aa).

Belongs to the profilin family. Occurs in many kinds of cells as a complex with monomeric actin in a 1:1 ratio.

The protein resides in the cytoplasm. It is found in the cytoskeleton. In terms of biological role, binds to actin and affects the structure of the cytoskeleton. At high concentrations, profilin prevents the polymerization of actin, whereas it enhances it at low concentrations. By binding to PIP2, it inhibits the formation of IP3 and DG. The polypeptide is Profilin (Branchiostoma belcheri (Amphioxus)).